The sequence spans 292 residues: Cyclin-dependent kinase 5 (292 aa).

Residues tyrosine 4–phenylalanine 286 enclose the Protein kinase domain. ATP-binding positions include isoleucine 10 to valine 18 and lysine 33. Residue tyrosine 15 is modified to Phosphotyrosine; by ABL1, EPHA4 and FYN. A Phosphothreonine modification is found at threonine 17. At lysine 56 the chain carries N6-acetyllysine. Position 72 is a phosphoserine (serine 72). Aspartate 126 functions as the Proton acceptor in the catalytic mechanism. Position 159 is a phosphoserine (serine 159).

Belongs to the protein kinase superfamily. CMGC Ser/Thr protein kinase family. CDC2/CDKX subfamily. In terms of assembly, heterodimer composed of a catalytic subunit CDK5 and a regulatory subunit CDK5R1 (p25) and macromolecular complex composed of at least CDK5, CDK5R1 (p35) and CDK5RAP1 or CDK5RAP2 or CDK5RAP3. Only the heterodimer shows kinase activity. Under neurotoxic stress and neuronal injury conditions, p35 is cleaved by calpain to generate p25 that hyperactivates CDK5, that becomes functionally disabled and often toxic. Found in a trimolecular complex with CABLES1 and ABL1. Interacts with CABLES1 and CABLES2. Interacts with AATK and GSTP1. Binds to HDAC1 when in complex with p25. Interaction with myristoylation p35 promotes CDK5 association with membranes. Both isoforms 1 and 2 interacts with beta-catenin/CTNNB1. Interacts with delta-catenin/CTNND2 and APEX1. Interacts with P53/TP53 in neurons. Interacts with EPHA4; may mediate the activation of NGEF by EPHA4. Interacts with PTK2/FAK1. The complex p35/CDK5 interacts with CLOCK. Interacts with HTR6. Phosphorylation on Tyr-15 by ABL1 and FYN, and on Ser-159 by casein kinase 1 promotes kinase activity. By contrast, phosphorylation at Thr-14 inhibits activity. In terms of processing, phosphorylation at Ser-159 is essential for maximal catalytic activity. As to expression, ubiquitously expressed. Accumulates in cortical neurons (at protein level). In terms of tissue distribution, expressed in the testis, skeletal muscle, colon, bone marrow and ovary.

It localises to the cytoplasm. The protein localises to the nucleus. The protein resides in the cell membrane. Its subcellular location is the perikaryon. It is found in the cell projection. It localises to the lamellipodium. The protein localises to the growth cone. The protein resides in the postsynaptic density. Its subcellular location is the synapse. The catalysed reaction is L-seryl-[protein] + ATP = O-phospho-L-seryl-[protein] + ADP + H(+). It catalyses the reaction L-threonyl-[protein] + ATP = O-phospho-L-threonyl-[protein] + ADP + H(+). With respect to regulation, inhibited by 2-(1-ethyl-2-hydroxyethylamino)-6-benzylamino-9-isopropylpurine (roscovitine), 1-isopropyl-4-aminobenzyl-6-ether-linked benzimidazoles, resveratrol, AT-7519 and olomoucine. Activated by CDK5R1 (p35) and CDK5R2 (p39) during the development of the nervous system; degradation of CDK5R1 (p35) and CDK5R2 (p39) by proteasome result in down regulation of kinase activity, during this process, CDK5 phosphorylates p35 and induces its ubiquitination and subsequent degradation. Kinase activity is mainly determined by the amount of p35 available and subcellular location; reversible association to plasma membrane inhibits activity. Long-term inactivation as well as CDK5R1 (p25)-mediated hyperactivation of CDK5 triggers cell death. The pro-death activity of hyperactivated CDK5 is suppressed by membrane association of CDK5, via myristoylation of p35. Brain-derived neurotrophic factor, glial-derived neurotrophic factor, nerve growth factor (NGF), retinoic acid, laminin and neuregulin promote activity. Neurotoxicity enhances nuclear activity, thus leading to MEF2 phosphorylation and inhibition prior to apoptosis of cortical neurons. Repression by GSTP1 via p25/p35 translocation prevents neurodegeneration. Its function is as follows. Proline-directed serine/threonine-protein kinase essential for neuronal cell cycle arrest and differentiation and may be involved in apoptotic cell death in neuronal diseases by triggering abortive cell cycle re-entry. Interacts with D1 and D3-type G1 cyclins. Phosphorylates SRC, NOS3, VIM/vimentin, p35/CDK5R1, MEF2A, SIPA1L1, SH3GLB1, PXN, PAK1, MCAM/MUC18, SEPT5, SYN1, DNM1, AMPH, SYNJ1, CDK16, RAC1, RHOA, CDC42, TONEBP/NFAT5, MAPT/TAU, MAP1B, histone H1, p53/TP53, HDAC1, APEX1, PTK2/FAK1, huntingtin/HTT, ATM, MAP2, NEFH and NEFM. Regulates several neuronal development and physiological processes including neuronal survival, migration and differentiation, axonal and neurite growth, synaptogenesis, oligodendrocyte differentiation, synaptic plasticity and neurotransmission, by phosphorylating key proteins. Negatively regulates the CACNA1B/CAV2.2 -mediated Ca(2+) release probability at hippocampal neuronal soma and synaptic terminals. Activated by interaction with CDK5R1 (p35) and CDK5R2 (p39), especially in postmitotic neurons, and promotes CDK5R1 (p35) expression in an autostimulation loop. Phosphorylates many downstream substrates such as Rho and Ras family small GTPases (e.g. PAK1, RAC1, RHOA, CDC42) or microtubule-binding proteins (e.g. MAPT/TAU, MAP2, MAP1B), and modulates actin dynamics to regulate neurite growth and/or spine morphogenesis. Also phosphorylates exocytosis associated proteins such as MCAM/MUC18, SEPT5, SYN1, and CDK16/PCTAIRE1 as well as endocytosis associated proteins such as DNM1, AMPH and SYNJ1 at synaptic terminals. In the mature central nervous system (CNS), regulates neurotransmitter movements by phosphorylating substrates associated with neurotransmitter release and synapse plasticity; synaptic vesicle exocytosis, vesicles fusion with the presynaptic membrane, and endocytosis. Promotes cell survival by activating anti-apoptotic proteins BCL2 and STAT3, and negatively regulating of JNK3/MAPK10 activity. Phosphorylation of p53/TP53 in response to genotoxic and oxidative stresses enhances its stabilization by preventing ubiquitin ligase-mediated proteasomal degradation, and induces transactivation of p53/TP53 target genes, thus regulating apoptosis. Phosphorylation of p35/CDK5R1 enhances its stabilization by preventing calpain-mediated proteolysis producing p25/CDK5R1 and avoiding ubiquitin ligase-mediated proteasomal degradation. During aberrant cell-cycle activity and DNA damage, p25/CDK5 activity elicits cell-cycle activity and double-strand DNA breaks that precedes neuronal death by deregulating HDAC1. DNA damage triggered phosphorylation of huntingtin/HTT in nuclei of neurons protects neurons against polyglutamine expansion as well as DNA damage mediated toxicity. Phosphorylation of PXN reduces its interaction with PTK2/FAK1 in matrix-cell focal adhesions (MCFA) during oligodendrocytes (OLs) differentiation. Negative regulator of Wnt/beta-catenin signaling pathway. Activator of the GAIT (IFN-gamma-activated inhibitor of translation) pathway, which suppresses expression of a post-transcriptional regulon of proinflammatory genes in myeloid cells; phosphorylates the linker domain of glutamyl-prolyl tRNA synthetase (EPRS) in a IFN-gamma-dependent manner, the initial event in assembly of the GAIT complex. Phosphorylation of SH3GLB1 is required for autophagy induction in starved neurons. Phosphorylation of TONEBP/NFAT5 in response to osmotic stress mediates its rapid nuclear localization. MEF2 is inactivated by phosphorylation in nucleus in response to neurotoxin, thus leading to neuronal apoptosis. APEX1 AP-endodeoxyribonuclease is repressed by phosphorylation, resulting in accumulation of DNA damage and contributing to neuronal death. NOS3 phosphorylation down regulates NOS3-derived nitrite (NO) levels. SRC phosphorylation mediates its ubiquitin-dependent degradation and thus leads to cytoskeletal reorganization. May regulate endothelial cell migration and angiogenesis via the modulation of lamellipodia formation. Involved in dendritic spine morphogenesis by mediating the EFNA1-EPHA4 signaling. The complex p35/CDK5 participates in the regulation of the circadian clock by modulating the function of CLOCK protein: phosphorylates CLOCK at 'Thr-451' and 'Thr-461' and regulates the transcriptional activity of the CLOCK-BMAL1 heterodimer in association with altered stability and subcellular distribution. In Homo sapiens (Human), this protein is Cyclin-dependent kinase 5.